The primary structure comprises 31 residues: Cytochrome b6-f complex subunit 6 (31 aa).

The helical transmembrane segment at 4–26 (LTSYFGFLLAASTITPALFIGLN) threads the bilayer.

This sequence belongs to the PetL family. As to quaternary structure, the 4 large subunits of the cytochrome b6-f complex are cytochrome b6, subunit IV (17 kDa polypeptide, PetD), cytochrome f and the Rieske protein, while the 4 small subunits are PetG, PetL, PetM and PetN. The complex functions as a dimer.

Its subcellular location is the plastid. The protein localises to the chloroplast thylakoid membrane. Its function is as follows. Component of the cytochrome b6-f complex, which mediates electron transfer between photosystem II (PSII) and photosystem I (PSI), cyclic electron flow around PSI, and state transitions. PetL is important for photoautotrophic growth as well as for electron transfer efficiency and stability of the cytochrome b6-f complex. This Phalaenopsis aphrodite subsp. formosana (Moth orchid) protein is Cytochrome b6-f complex subunit 6.